A 558-amino-acid polypeptide reads, in one-letter code: Armadillo repeat-containing X-linked protein 5 (558 aa).

Basic and acidic residues-rich tracts occupy residues 1 to 14 (MVDSGTEARARGKA) and 139 to 156 (KSHDKANTGSRPDRREEA). Disordered stretches follow at residues 1 to 34 (MVDSGTEARARGKAEAGLQDGISGPAAARVNGKT) and 139 to 163 (KSHDKANTGSRPDRREEASIGMKSS). ARM repeat units follow at residues 300 to 339 (CKSRGFSLEPKEFDKLVALLKLTKDPFIHEIATMIMGISP), 422 to 461 (VKFEDHYVITSYIPDFLTLLNKGSVKTKFYVLKVFSCLSK), 463 to 503 (HANT…NINF), and 520 to 558 (SELISIFQEAKQFGQKLQDLAEHSDPEVRDKVIRLILKL).

The protein belongs to the eutherian X-chromosome-specific Armcx family.

The protein is Armadillo repeat-containing X-linked protein 5 (ARMCX5) of Pongo abelii (Sumatran orangutan).